A 465-amino-acid chain; its full sequence is Uronate isomerase (465 aa).

It belongs to the metallo-dependent hydrolases superfamily. Uronate isomerase family.

The enzyme catalyses D-glucuronate = D-fructuronate. It carries out the reaction aldehydo-D-galacturonate = keto-D-tagaturonate. The protein operates within carbohydrate metabolism; pentose and glucuronate interconversion. The sequence is that of Uronate isomerase from Streptococcus equi subsp. zooepidemicus (strain MGCS10565).